We begin with the raw amino-acid sequence, 420 residues long: UDP-N-acetylglucosamine 1-carboxyvinyltransferase (420 aa).

22–23 (KN) provides a ligand contact to phosphoenolpyruvate. UDP-N-acetyl-alpha-D-glucosamine is bound at residue R94. Catalysis depends on C118, which acts as the Proton donor. Position 118 is a 2-(S-cysteinyl)pyruvic acid O-phosphothioketal (C118). UDP-N-acetyl-alpha-D-glucosamine contacts are provided by D306 and I328.

This sequence belongs to the EPSP synthase family. MurA subfamily.

It is found in the cytoplasm. It catalyses the reaction phosphoenolpyruvate + UDP-N-acetyl-alpha-D-glucosamine = UDP-N-acetyl-3-O-(1-carboxyvinyl)-alpha-D-glucosamine + phosphate. It participates in cell wall biogenesis; peptidoglycan biosynthesis. In terms of biological role, cell wall formation. Adds enolpyruvyl to UDP-N-acetylglucosamine. The chain is UDP-N-acetylglucosamine 1-carboxyvinyltransferase from Jannaschia sp. (strain CCS1).